The chain runs to 109 residues: Large ribosomal subunit protein eL30 (109 aa).

It belongs to the eukaryotic ribosomal protein eL30 family. As to quaternary structure, component of the large ribosomal subunit (LSU). Mature N.crassa ribosomes consist of a small (40S) and a large (60S) subunit. The 40S small subunit contains 1 molecule of ribosomal RNA (18S rRNA) and at least 32 different proteins. The large 60S subunit contains 3 rRNA molecules (26S, 5.8S and 5S rRNA) and at least 42 different proteins.

The protein resides in the cytoplasm. Functionally, component of the ribosome, a large ribonucleoprotein complex responsible for the synthesis of proteins in the cell. The small ribosomal subunit (SSU) binds messenger RNAs (mRNAs) and translates the encoded message by selecting cognate aminoacyl-transfer RNA (tRNA) molecules. The large subunit (LSU) contains the ribosomal catalytic site termed the peptidyl transferase center (PTC), which catalyzes the formation of peptide bonds, thereby polymerizing the amino acids delivered by tRNAs into a polypeptide chain. The nascent polypeptides leave the ribosome through a tunnel in the LSU and interact with protein factors that function in enzymatic processing, targeting, and the membrane insertion of nascent chains at the exit of the ribosomal tunnel. The sequence is that of Large ribosomal subunit protein eL30 (rpl-30) from Neurospora crassa (strain ATCC 24698 / 74-OR23-1A / CBS 708.71 / DSM 1257 / FGSC 987).